Reading from the N-terminus, the 466-residue chain is Trigger factor (466 aa).

The PPIase FKBP-type domain maps to 166 to 245 (GDFAQIDLVA…LNAVKERELP (80 aa)). Disordered stretches follow at residues 313–332 (LEQE…TESS) and 424–466 (LPDD…AADK). Acidic residues predominate over residues 426–444 (DDGEAVDEDATPEDTDAPA). A compositionally biased stretch (basic residues) spans 453-466 (PKKKAAAKKKAADK).

This sequence belongs to the FKBP-type PPIase family. Tig subfamily.

The protein localises to the cytoplasm. The catalysed reaction is [protein]-peptidylproline (omega=180) = [protein]-peptidylproline (omega=0). Involved in protein export. Acts as a chaperone by maintaining the newly synthesized protein in an open conformation. Functions as a peptidyl-prolyl cis-trans isomerase. This chain is Trigger factor, found in Leifsonia xyli subsp. xyli (strain CTCB07).